Reading from the N-terminus, the 293-residue chain is tRNA pseudouridine synthase B (293 aa).

Asp-40 serves as the catalytic Nucleophile.

This sequence belongs to the pseudouridine synthase TruB family. Type 1 subfamily.

The enzyme catalyses uridine(55) in tRNA = pseudouridine(55) in tRNA. Responsible for synthesis of pseudouridine from uracil-55 in the psi GC loop of transfer RNAs. This Rickettsia akari (strain Hartford) protein is tRNA pseudouridine synthase B.